The primary structure comprises 89 residues: cAMP-regulated phosphoprotein 21 (89 aa).

Positions 1–89 (MSEPGDLSQT…GGESLQDQTL (89 aa)) are disordered. The residue at position 2 (Ser2) is an N-acetylserine. Ser33 and Ser56 each carry phosphoserine.

As to quaternary structure, interacts with CALM1. In terms of processing, phosphorylation at Ser-56 favors interaction with CALM1.

It is found in the cytoplasm. Functionally, may act as a competitive inhibitor of calmodulin-dependent enzymes such as calcineurin in neurons. In Bos taurus (Bovine), this protein is cAMP-regulated phosphoprotein 21 (ARPP21).